We begin with the raw amino-acid sequence, 207 residues long: Abscisic acid receptor PYL9 (207 aa).

Positions 31–197 (FPPSTTTATT…NLQMLAAVAE (167 aa)) are START-like. Abscisate-binding positions include Lys-74, 104–109 (ASTSTE), 131–137 (RLRNYRS), and Glu-162. The Gate loop signature appears at 100-104 (SGLPA). The Latch loop motif lies at 130-132 (HRL).

The protein belongs to the PYR/PYL/RCAR abscisic acid intracellular receptor family. As to quaternary structure, homodimer. Interacts with PP2C06. Interacts with PP2C50. Binding to PP2C50 is dependent on the presence of abscisic acid (ABA). Interacts with PP2C30 and PP2C53. Binding to PP2C30 and PP2C53 is dependent on the presence of ABA.

It localises to the cytoplasm. It is found in the cytosol. The protein resides in the nucleus. Functionally, involved in abscisic acid (ABA) signaling during seed germination and abiotic stress response. Acts as a positive regulator of ABA-mediated inhibition of seed germination, and tolerance to drought and cold stresses. Inhibits the activity of the protein phosphatases PP2C06 and PP2C09 when activated by abscisic acid (ABA). In Oryza sativa subsp. japonica (Rice), this protein is Abscisic acid receptor PYL9.